Here is a 160-residue protein sequence, read N- to C-terminus: Crossover junction endodeoxyribonuclease RuvC (160 aa).

Catalysis depends on residues D7, E67, and D138. The Mg(2+) site is built by D7, E67, and D138.

It belongs to the RuvC family. In terms of assembly, homodimer which binds Holliday junction (HJ) DNA. The HJ becomes 2-fold symmetrical on binding to RuvC with unstacked arms; it has a different conformation from HJ DNA in complex with RuvA. In the full resolvosome a probable DNA-RuvA(4)-RuvB(12)-RuvC(2) complex forms which resolves the HJ. Mg(2+) is required as a cofactor.

It is found in the cytoplasm. It catalyses the reaction Endonucleolytic cleavage at a junction such as a reciprocal single-stranded crossover between two homologous DNA duplexes (Holliday junction).. Its function is as follows. The RuvA-RuvB-RuvC complex processes Holliday junction (HJ) DNA during genetic recombination and DNA repair. Endonuclease that resolves HJ intermediates. Cleaves cruciform DNA by making single-stranded nicks across the HJ at symmetrical positions within the homologous arms, yielding a 5'-phosphate and a 3'-hydroxyl group; requires a central core of homology in the junction. The consensus cleavage sequence is 5'-(A/T)TT(C/G)-3'. Cleavage occurs on the 3'-side of the TT dinucleotide at the point of strand exchange. HJ branch migration catalyzed by RuvA-RuvB allows RuvC to scan DNA until it finds its consensus sequence, where it cleaves and resolves the cruciform DNA. The sequence is that of Crossover junction endodeoxyribonuclease RuvC from Brachyspira hyodysenteriae (strain ATCC 49526 / WA1).